The sequence spans 344 residues: MSNAITMGIFWHLIGAASAACFYAPFKQVKQWSWETMWSVGGIVSWLILPWTISALLLPDFWAYYGQFNLSTLLPVFLFGAMWGIGNINYGLTMRYLGMSMGIGIAIGITLIVGTLMTPIINGNFDVLIHTEGGHMTLLGVFVALIGVGIVTRAGQLKERKMGIKAEEFNLKKGLLLAVMCGIFSAGMSFAMNAAKPMHEAAAALGVDPLYVALPSYVVIMGGGALVNLGFCFIRLAKVQNLSIKADFSLARPLIISNILLSALGGLMWYLQFFFYAWGHARIPAQYDYMSWMLHMSFYVLCGGLVGLVLKEWKNAGRRPVAVLSLGCVVIIIAANIVGLGMAS.

10 helical membrane passes run 4–24, 38–58, 68–88, 101–121, 131–151, 175–195, 214–234, 259–279, 290–310, and 321–341; these read AITM…CFYA, WSVG…ALLL, FNLS…IGNI, MGIG…TPII, TEGG…VGIV, LLLA…MNAA, LPSY…FCFI, ILLS…YAWG, MSWM…GLVL, and VAVL…VGLG.

Belongs to the L-rhamnose transporter (TC 2.A.7.6) family.

The protein localises to the cell inner membrane. It carries out the reaction L-rhamnopyranose(in) + H(+)(in) = L-rhamnopyranose(out) + H(+)(out). Uptake of L-rhamnose across the cytoplasmic membrane with the concomitant transport of protons into the cell (symport system). The sequence is that of L-rhamnose-proton symporter from Salmonella typhi.